Reading from the N-terminus, the 431-residue chain is UDP-N-acetylglucosamine 1-carboxyvinyltransferase (431 aa).

Residue 22 to 23 coordinates phosphoenolpyruvate; the sequence is KN. Arg102 contacts UDP-N-acetyl-alpha-D-glucosamine. Catalysis depends on Cys126, which acts as the Proton donor. Cys126 carries the post-translational modification 2-(S-cysteinyl)pyruvic acid O-phosphothioketal. Positions 318 and 340 each coordinate UDP-N-acetyl-alpha-D-glucosamine.

The protein belongs to the EPSP synthase family. MurA subfamily.

It is found in the cytoplasm. The catalysed reaction is phosphoenolpyruvate + UDP-N-acetyl-alpha-D-glucosamine = UDP-N-acetyl-3-O-(1-carboxyvinyl)-alpha-D-glucosamine + phosphate. It functions in the pathway cell wall biogenesis; peptidoglycan biosynthesis. In terms of biological role, cell wall formation. Adds enolpyruvyl to UDP-N-acetylglucosamine. The polypeptide is UDP-N-acetylglucosamine 1-carboxyvinyltransferase (Bartonella tribocorum (strain CIP 105476 / IBS 506)).